Reading from the N-terminus, the 459-residue chain is Elongation factor 1-alpha 2 (459 aa).

A tr-type G domain is found at 5–242 (KTHINIVVIG…DCIIPPQRPT (238 aa)). Residues 14-21 (GHVDSGKS) form a G1 region. Residues 70–74 (GITID) are G2. The segment at 91 to 94 (DAPG) is G3. A G4 region spans residues 153 to 156 (NKMD). Residues 194–196 (SGF) form a G5 region. Residues Glu-301 and Glu-374 each carry the 5-glutamyl glycerylphosphorylethanolamine modification.

Belongs to the TRAFAC class translation factor GTPase superfamily. Classic translation factor GTPase family. EF-Tu/EF-1A subfamily.

It localises to the cytoplasm. Functionally, this protein promotes the GTP-dependent binding of aminoacyl-tRNA to the A-site of ribosomes during protein biosynthesis. The polypeptide is Elongation factor 1-alpha 2 (eft-2) (Oscheius tipulae).